Consider the following 550-residue polypeptide: Chaperonin GroEL (550 aa).

ATP-binding positions include 30-33 (TLGP), K51, 87-91 (DGTTT), G415, and D496.

Belongs to the chaperonin (HSP60) family. As to quaternary structure, forms a cylinder of 14 subunits composed of two heptameric rings stacked back-to-back. Interacts with the co-chaperonin GroES.

The protein resides in the cytoplasm. The enzyme catalyses ATP + H2O + a folded polypeptide = ADP + phosphate + an unfolded polypeptide.. In terms of biological role, together with its co-chaperonin GroES, plays an essential role in assisting protein folding. The GroEL-GroES system forms a nano-cage that allows encapsulation of the non-native substrate proteins and provides a physical environment optimized to promote and accelerate protein folding. The protein is Chaperonin GroEL of Rickettsia typhi (strain ATCC VR-144 / Wilmington).